Here is a 244-residue protein sequence, read N- to C-terminus: 1-(5-phosphoribosyl)-5-[(5-phosphoribosylamino)methylideneamino] imidazole-4-carboxamide isomerase (244 aa).

Residue Asp-9 is the Proton acceptor of the active site. Asp-131 (proton donor) is an active-site residue.

This sequence belongs to the HisA/HisF family.

The protein resides in the cytoplasm. The catalysed reaction is 1-(5-phospho-beta-D-ribosyl)-5-[(5-phospho-beta-D-ribosylamino)methylideneamino]imidazole-4-carboxamide = 5-[(5-phospho-1-deoxy-D-ribulos-1-ylimino)methylamino]-1-(5-phospho-beta-D-ribosyl)imidazole-4-carboxamide. The protein operates within amino-acid biosynthesis; L-histidine biosynthesis; L-histidine from 5-phospho-alpha-D-ribose 1-diphosphate: step 4/9. The protein is 1-(5-phosphoribosyl)-5-[(5-phosphoribosylamino)methylideneamino] imidazole-4-carboxamide isomerase of Campylobacter jejuni subsp. jejuni serotype O:6 (strain 81116 / NCTC 11828).